A 282-amino-acid chain; its full sequence is Elongation factor Ts (282 aa).

The segment at 79–82 (TDFV) is involved in Mg(2+) ion dislocation from EF-Tu.

It belongs to the EF-Ts family.

It is found in the cytoplasm. Associates with the EF-Tu.GDP complex and induces the exchange of GDP to GTP. It remains bound to the aminoacyl-tRNA.EF-Tu.GTP complex up to the GTP hydrolysis stage on the ribosome. In Colwellia psychrerythraea (strain 34H / ATCC BAA-681) (Vibrio psychroerythus), this protein is Elongation factor Ts.